A 113-amino-acid chain; its full sequence is Large ribosomal subunit protein P1z (113 aa).

Positions 87 to 113 are disordered; it reads AAAPAKEEKKDEPAEESDGDLGFGLFD. A Phosphoserine modification is found at Ser-103.

It belongs to the eukaryotic ribosomal protein P1/P2 family. P1 and P2 exist as dimers at the large ribosomal subunit.

Functionally, plays an important role in the elongation step of protein synthesis. The protein is Large ribosomal subunit protein P1z (RPP1B) of Arabidopsis thaliana (Mouse-ear cress).